Consider the following 549-residue polypeptide: Glucose-6-phosphate isomerase (549 aa).

The active-site Proton donor is the Glu353. Residues His384 and Lys513 contribute to the active site.

It belongs to the GPI family.

It localises to the cytoplasm. It carries out the reaction alpha-D-glucose 6-phosphate = beta-D-fructose 6-phosphate. The protein operates within carbohydrate biosynthesis; gluconeogenesis. It functions in the pathway carbohydrate degradation; glycolysis; D-glyceraldehyde 3-phosphate and glycerone phosphate from D-glucose: step 2/4. In terms of biological role, catalyzes the reversible isomerization of glucose-6-phosphate to fructose-6-phosphate. This Brucella abortus (strain S19) protein is Glucose-6-phosphate isomerase.